A 328-amino-acid chain; its full sequence is Glutathionyl-hydroquinone reductase YqjG (328 aa).

Cys63 functions as the Nucleophile in the catalytic mechanism. Residues Trp96, 130–133 (RVTV), and 148–149 (ES) contribute to the glutathione site. The GST C-terminal domain occupies 172 to 296 (PPALQTKIDE…VNFDHIRNHY (125 aa)). Catalysis depends on Tyr195, which acts as the Proton donor/acceptor. Positions 203–311 (QEAYDEAVAK…TINPTGIISI (109 aa)) are dimerization.

It belongs to the GST superfamily. Xi-class GSH transferase family. Homodimer.

It catalyses the reaction 2-(glutathione-S-yl)-hydroquinone + glutathione = hydroquinone + glutathione disulfide. In terms of biological role, catalyzes glutathione (GSH)-dependent reduction of glutathionyl-hydroquinones (GS-HQs) to the corresponding hydroquinones. Can use a variety of GS-HQs as substrates, such as GS-p-hydroquinone (GS-HQ), GS-hydroxy-p-hydroquinone (GS-HHQ), GS-methyl-p-hydroquinone (GS-MHQ), GS-menadiol, and GS-trichloro-p-hydroquinone (GS-TriCH). Also displays GSH-dependent disulfide-bond reduction activity toward HED (2-hydroxyethyl disulfide), and is able to catalyze DMA (dimethylarsinate) reduction. Exhibits no GSH transferase activity with 1-chloro-2,4-dinitrobenzene (CDNB). This is Glutathionyl-hydroquinone reductase YqjG (yqjG) from Escherichia coli (strain K12).